Here is a 935-residue protein sequence, read N- to C-terminus: MTELKAKGXRAPHVAGSPSSPKVXSPLPCRQAAXPFPGSQTSDTLPEVSALPISLDGLLFPRICQGQDPPDEKTQDQQSLSDVEGAYSRVEATRGAGGSSSRPPEKDSGLLDSVLDTLWAPSGPGQSQPSPPACEVTSSWCLFGPELPEDPPGTSATQRVLSRLMSRSGGKAGDSSGMAAAHKVLPRGLSPSRQLLLPTTGSPHWSGAPVKPSPQSAALEVEEEDGSESEDSAGPLLKGKPRALGGAAAGGGAAAVPPGAXAGGIALVPKEDSCFSAPRVALVEQDAPMAPGRSPLATTVTDFIHVPILPLSHALLAARTRQLLEDESYDGGAGAASAFAPPRSSPSASSTPVPGGDFPDCAYAPDAEPKDDAYPVYGDFQPPALKIKEEEEGAEASARSPRSYLVAGASPAAFPDFPLGPPPPLPPRAPPSRPGEAAVTAAPASASVSSASSSGSTLECILYKAEGAPPQQGPFAPPPCKAPGAGGCLLPRDSLPSTSASAAATAAGAAPALYPALGLNGLPQLGYQAAVLKEGLPQVYPPYLNYLRPDSEASQSPQYSFESLPQKICLICGDEASGCHYGVLTCGSCKVFFKRAMEGQHNYLCAGRNDCIVDKIRRKNCPACRLRKCCQAGMVLGGRKFKKFNKVRVMRALDAVALPQPVGIPNENQALSQRFTFSPNQDIQLIPPLINLLLSIEPDVIYAGHDHTKPDTSSSLLTSLNQLGERQLLSVVKWSKSLPGFRNLHIDDQITLIQYSWMSLMVFGLGWRSYKHVSGQMLYFAPDLILNEQRMKESSFYSLCLTMWQIPQEFVKLQVSQEEFLCMKVLLLLNTIPLEGLRSQTQFEEMRSSYIRELIKAIGLRQKGVVPSSQRFYQLTKLLDNLHDLVKQLHLYCLNTFIQSRALSVEFPEMMSEVIAAQLPKILAGMVKPLLFHKK.

Residues M1–S49 are disordered. The interval M1–L164 is AF3; mediates transcriptional activation. The modulating, Pro-Rich stretch occupies residues M1–I568. Low complexity predominate over residues S17–P28. S20 bears the Phosphoserine mark. Positions L55 to L59 match the LXXL motif 1 motif. Residues P61–A255 are disordered. S81 bears the Phosphoserine mark. The short motif at L115 to W119 is the LXXL motif 2 element. Residues S130 and S162 each carry the phosphoserine modification. The mediates transcriptional transrepression stretch occupies residues M165 to H305. Positions K183–R187 match the Nuclear localization signal motif. Phosphoserine is present on S190. Residues P191–P203 are compositionally biased toward polar residues. S213 is modified (phosphoserine). The span at E220 to D231 shows a compositional bias: acidic residues. A compositionally biased stretch (low complexity) spans S232 to G246. S294 is subject to Phosphoserine; by MAPK1. Residues G331 to P365 form a disordered region. Positions A335 to G356 are enriched in low complexity. At S345 the chain carries Phosphoserine; by MAPK. K388 is covalently cross-linked (Glycyl lysine isopeptide (Lys-Gly) (interchain with G-Cter in SUMO); alternate). A Glycyl lysine isopeptide (Lys-Gly) (interchain with G-Cter in ubiquitin); alternate cross-link involves residue K388. S400 carries the post-translational modification Phosphoserine; by CDK2. Residues P415–S452 form a disordered region. Residues P418–R433 are compositionally biased toward pro residues. Residues P434–S452 are compositionally biased toward low complexity. The tract at residues S456 to R548 is AF1; mediates transcriptional activation. Residue K533 forms a Glycyl lysine isopeptide (Lys-Gly) (interchain with G-Cter in SUMO) linkage. NR C4-type zinc fingers lie at residues C569 to C589 and C605 to C629. The nuclear receptor DNA-binding region spans C569–F641. A Phosphoserine modification is found at S678. Residues Q681–I915 form the NR LBD domain. Positions L689–K935 are AF2; mediates transcriptional activation.

The protein belongs to the nuclear hormone receptor family. Interacts with SMARD1 and UNC45A. Interacts with CUEDC2; the interaction promotes ubiquitination, decreases sumoylation, and represses transcriptional activity. Interacts with PIAS3; the interaction promotes sumoylation of PR in a hormone-dependent manner, inhibits DNA-binding, and alters nuclear export. Interacts with SP1; the interaction requires ligand-induced phosphorylation on Ser-345 by ERK1/2-MAPK. Interacts with PRMT2. Interacts with NCOA2 and NCOA1. Interacts with KLF9. Interacts with GTF2B. Post-translationally, phosphorylated on multiple serine sites. Several of these sites are hormone-dependent. Phosphorylation on Ser-294 is highly hormone-dependent and modulates ubiquitination and sumoylation on Lys-388. Phosphorylation on Ser-345 also requires induction by hormone. Basal phosphorylation on Ser-81, Ser-162, Ser-190 and Ser-400 is increased in response to progesterone and can be phosphorylated in vitro by the CDK2-A1 complex. Increased levels of phosphorylation on Ser-400 also in the presence of EGF, heregulin, IGF, PMA and FBS. Phosphorylation at this site by CDK2 is ligand-independent, and increases nuclear translocation and transcriptional activity. Phosphorylation at Ser-162 and Ser-294, but not at Ser-190, is impaired during the G(2)/M phase of the cell cycle. Phosphorylation on Ser-345 by ERK1/2 MAPK is required for interaction with SP1. Sumoylation is hormone-dependent and represses transcriptional activity. Sumoylation on all three sites is enhanced by PIAS3. Desumoylated by SENP1. Sumoylation on Lys-388, the main site of sumoylation, is repressed by ubiquitination on the same site, and modulated by phosphorylation at Ser-294. In terms of processing, ubiquitination is hormone-dependent and represses sumoylation on the same site. Promoted by MAPK-mediated phosphorylation on Ser-294. Post-translationally, palmitoylated by ZDHHC7 and ZDHHC21. Palmitoylation is required for plasma membrane targeting and for rapid intracellular signaling via ERK and AKT kinases and cAMP generation.

The protein localises to the nucleus. It localises to the cytoplasm. In terms of biological role, the steroid hormones and their receptors are involved in the regulation of eukaryotic gene expression and affect cellular proliferation and differentiation in target tissues. Transcriptional activator of several progesteron-dependent promoters in a variety of cell types. Involved in activation of SRC-dependent MAPK signaling on hormone stimulation. This chain is Progesterone receptor (PGR), found in Ateles paniscus (Black spider monkey).